A 156-amino-acid chain; its full sequence is Protein UXT (156 aa).

The protein belongs to the UXT family. Homohexamer. Component of the PAQosome complex which is responsible for the biogenesis of several protein complexes and which consists of R2TP complex members RUVBL1, RUVBL2, RPAP3 and PIH1D1, URI complex members PFDN2, PFDN6, PDRG1, UXT and URI1 as well as ASDURF, POLR2E and DNAAF10/WDR92. Interacts with LRPPRC. Interacts with androgen receptor AR (via N-terminus). Interacts with estrogen receptor ESR1; the interaction relocalizes ESR1 to the cytoplasm. In the nucleus, interacts specifically with RELA (via RHD domain) and forms a dynamic complex with NF-kappa-B and is recruited to the NF-kappa-B enhanceosome upon stimulation. Interacts with MECOM. Interacts with URI1.

It localises to the cytoplasm. The protein localises to the nucleus. Its subcellular location is the cytoskeleton. The protein resides in the microtubule organizing center. It is found in the centrosome. It localises to the spindle pole. In terms of biological role, involved in gene transcription regulation. Acts in concert with the corepressor URI1 to regulate androgen receptor AR-mediated transcription. Together with URI1, associates with chromatin to the NKX3-1 promoter region. Negatively regulates the transcriptional activity of the estrogen receptor ESR1 by inducing its translocation into the cytoplasm. May act as nuclear chaperone that facilitates the formation of the NF-kappa-B enhanceosome and thus positively regulates NF-kappa-B transcription activity. Potential component of mitochondrial-associated LRPPRC, a multidomain organizer that potentially integrates mitochondria and the microtubular cytoskeleton with chromosome remodeling. Increasing concentrations of UXT contributes to progressive aggregation of mitochondria and cell death potentially through its association with LRPPRC. Suppresses cell transformation and it might mediate this function by interaction and inhibition of the biological activity of cell proliferation and survival stimulatory factors like MECOM. In Bos taurus (Bovine), this protein is Protein UXT (UXT).